We begin with the raw amino-acid sequence, 332 residues long: Glyceraldehyde-3-phosphate dehydrogenase 2 (332 aa).

Arginine 11, isoleucine 12, and aspartate 33 together coordinate NAD(+). Residues lysine 46 and lysine 63 each participate in a glycyl lysine isopeptide (Lys-Gly) (interchain with G-Cter in ubiquitin) cross-link. NAD(+) is bound at residue threonine 120. Residues 149–151 (SCT), threonine 180, 209–210 (TG), and arginine 232 contribute to the D-glyceraldehyde 3-phosphate site. Catalysis depends on cysteine 150, which acts as the Nucleophile. Serine 302 is modified (phosphoserine). NAD(+)-binding residues include asparagine 314 and tyrosine 318.

This sequence belongs to the glyceraldehyde-3-phosphate dehydrogenase family. In terms of assembly, homotetramer.

The protein resides in the cytoplasm. The enzyme catalyses D-glyceraldehyde 3-phosphate + phosphate + NAD(+) = (2R)-3-phospho-glyceroyl phosphate + NADH + H(+). It carries out the reaction NADH + H2O = (6R)-NADHX. The catalysed reaction is NADH + H2O = (6S)-NADHX. It catalyses the reaction NADPH + H2O = (6R)-NADPHX. The enzyme catalyses NADPH + H2O = (6S)-NADPHX. Its pathway is carbohydrate degradation; glycolysis; pyruvate from D-glyceraldehyde 3-phosphate: step 1/5. In terms of biological role, glyceraldehyde-3-phosphate dehydrogenase (GAPDH) involved in glycolysis and gluconeogenesis. Catalyzes the reaction of glyceraldehyde-3-phosphate to 1,3 bis-phosphoglycerate. The contribution of the TDH1, TDH2, and TDH3 to the total glyceraldehyde-3-phosphate dehydrogenase activity is 10-15, 25-30, and 50-60%, respectively. As a side activity, catalyzes the hydration of the nicotinamide ring of NADH or NADPH at the C6 position to give the corresponding hydrates, NADHX and NADPHX, which exist as R and S epimers, that cannot act as electron donors or acceptors and inhibit several dehydrogenases, making them toxic. This is Glyceraldehyde-3-phosphate dehydrogenase 2 from Saccharomyces cerevisiae (strain ATCC 204508 / S288c) (Baker's yeast).